The primary structure comprises 160 residues: Large ribosomal subunit protein bL17 (160 aa).

A disordered region spans residues 128 to 160; sequence KKATKTRRSRKRKSADVVVEAAPAEETPKAAEE. A compositionally biased stretch (basic residues) spans 129 to 140; it reads KATKTRRSRKRK.

Belongs to the bacterial ribosomal protein bL17 family. Part of the 50S ribosomal subunit. Contacts protein L32.

This chain is Large ribosomal subunit protein bL17, found in Porphyromonas gingivalis (strain ATCC 33277 / DSM 20709 / CIP 103683 / JCM 12257 / NCTC 11834 / 2561).